A 322-amino-acid polypeptide reads, in one-letter code: MKKIAILTSGGDASTMNKCLSTFITYASKYNCEVVFVKNGYKGIYDNEFVKPDYTETKSWWSLPGTKIYSSRFPEILDEQVRKQMVDNLHKNSIDTLVVIGGDGSYKGARLLSKSGIKVIGLPGTIDNDIASTSYSIGFDTSLNAIVNSIKEIKSCMDSHANVAMIEIMGRHCIDLTVFAGIATEADIIITPESFYTPQQLLAKINEKRKTNSRGIIILYVELLLGTENIPTVEEYIKYIQANSKESVKKNILGYLQRGGNPTAMDMIRASLMTEHALKMISENQYNKIIGVDEFKVVSYDLETAINMKNPSRKDLIDKFFN.

ATP is bound by residues Gly11, 72–73 (RF), and 102–105 (GDGS). Asp103 is a binding site for Mg(2+). Residues 125–127 (TID), 169–171 (MGR), Glu222, Lys249, and 255–258 (YLQR) contribute to the substrate site. The Proton acceptor role is filled by Asp127.

It belongs to the phosphofructokinase type A (PFKA) family. Homotetramer. Requires Mg(2+) as cofactor.

The protein resides in the cytoplasm. The catalysed reaction is beta-D-fructose 6-phosphate + ATP = beta-D-fructose 1,6-bisphosphate + ADP + H(+). The protein operates within carbohydrate degradation; glycolysis; D-glyceraldehyde 3-phosphate and glycerone phosphate from D-glucose: step 3/4. Its function is as follows. Catalyzes the phosphorylation of D-fructose 6-phosphate to fructose 1,6-bisphosphate by ATP, the first committing step of glycolysis. This is Probable ATP-dependent 6-phosphofructokinase (pfkA) from Malacoplasma penetrans (strain HF-2) (Mycoplasma penetrans).